We begin with the raw amino-acid sequence, 102 residues long: Trans-acting regulatory protein HvrA (102 aa).

A DNA-binding region spans residues 80-85; it reads RGRKPK.

It belongs to the histone-like protein H-NS family. In terms of assembly, homodimer that oligomerizes on DNA into higher-order complexes that form bridges between disparate regions of DNA compacting it.

The protein resides in the cytoplasm. Its subcellular location is the nucleoid. Its function is as follows. A dim-light trans-acting activator of Puf and Puh expression, that has no effect on the expression of the Puc operon. Responsible for regulating light-harvesting-I and reaction center structural gene expression differentially from that of light-harvesting-II expression in response to alterations in light. Proper light regulation of light-harvesting and reaction center polypeptide synthesis is an important physiological trait that enables cells to adapt to ever-changing environmental conditions of light intensity. This is Trans-acting regulatory protein HvrA (hvrA) from Rhodobacter capsulatus (Rhodopseudomonas capsulata).